A 944-amino-acid polypeptide reads, in one-letter code: Lactoferrin-binding protein A (944 aa).

Residues 1–27 (MNKKHGFSLTLTALAIAAAFPSYAANP) form the signal peptide. Positions 52–178 (RRSKEATGLG…LGGAVAFRTK (127 aa)) constitute a TBDR plug domain. In terms of domain architecture, TBDR beta-barrel spans 189–944 (SWGIQAKTAY…NFSLALEMKF (756 aa)). The TonB C-terminal box motif lies at 927-944 (GRYAAPGRNFSLALEMKF).

It belongs to the TonB-dependent receptor family.

It localises to the cell outer membrane. In terms of biological role, unknown. May be an iron-siderophore receptor. This Neisseria meningitidis serogroup A / serotype 4A (strain DSM 15465 / Z2491) protein is Lactoferrin-binding protein A (lbpA).